A 489-amino-acid polypeptide reads, in one-letter code: GTPase Der (489 aa).

2 EngA-type G domains span residues 3–166 (PVIA…PKDE) and 195–368 (IKIA…KSAV). GTP is bound by residues 9–16 (GRPNVGKS), 56–60 (DTGGI), 118–121 (NKID), 201–208 (GRPNVGKS), 248–252 (DTAGV), and 313–316 (NKWD). In terms of domain architecture, KH-like spans 369-453 (TRWPTSRLTQ…PIRIEFKGGE (85 aa)). Residues 451-489 (GGENPYEGNKNTLTDRQVNKKRRMMSHHKKADKKRRDKR) form a disordered region. A compositionally biased stretch (basic residues) spans 469–489 (NKKRRMMSHHKKADKKRRDKR).

It belongs to the TRAFAC class TrmE-Era-EngA-EngB-Septin-like GTPase superfamily. EngA (Der) GTPase family. Associates with the 50S ribosomal subunit.

Functionally, GTPase that plays an essential role in the late steps of ribosome biogenesis. This is GTPase Der from Pseudomonas syringae pv. tomato (strain ATCC BAA-871 / DC3000).